The sequence spans 163 residues: C-type lectin lectoxin-Lio1 (163 aa).

The signal sequence occupies residues 1-21 (MERFIFAALLVVALSLSGTGA). 3 disulfide bridges follow: Cys-25/Cys-36, Cys-53/Cys-152, and Cys-127/Cys-144. The C-type lectin domain maps to 32–153 (SDGYCYKVFK…CRSKRYFICK (122 aa)). The short motif at 117-119 (EPN) is the Mannose-binding element. Positions 125 and 141 each coordinate Ca(2+).

It belongs to the true venom lectin family. As to expression, expressed by the venom gland.

It is found in the secreted. Mannose-binding lectin which recognizes specific carbohydrate structures and agglutinates a variety of animal cells by binding to cell-surface glycoproteins and glycolipids. May be a calcium-dependent lectin. In Erythrolamprus poecilogyrus (Water snake), this protein is C-type lectin lectoxin-Lio1.